Reading from the N-terminus, the 202-residue chain is Peptidyl-tRNA hydrolase (202 aa).

Y19 lines the tRNA pocket. H24 functions as the Proton acceptor in the catalytic mechanism. TRNA-binding residues include Y70, N72, and N118.

Belongs to the PTH family. Monomer.

It localises to the cytoplasm. The enzyme catalyses an N-acyl-L-alpha-aminoacyl-tRNA + H2O = an N-acyl-L-amino acid + a tRNA + H(+). Functionally, hydrolyzes ribosome-free peptidyl-tRNAs (with 1 or more amino acids incorporated), which drop off the ribosome during protein synthesis, or as a result of ribosome stalling. Its function is as follows. Catalyzes the release of premature peptidyl moieties from peptidyl-tRNA molecules trapped in stalled 50S ribosomal subunits, and thus maintains levels of free tRNAs and 50S ribosomes. The polypeptide is Peptidyl-tRNA hydrolase (Prochlorococcus marinus (strain NATL2A)).